The sequence spans 352 residues: Histidinol-phosphate aminotransferase (352 aa).

N6-(pyridoxal phosphate)lysine is present on K221.

Belongs to the class-II pyridoxal-phosphate-dependent aminotransferase family. Histidinol-phosphate aminotransferase subfamily. Homodimer. Pyridoxal 5'-phosphate is required as a cofactor.

The enzyme catalyses L-histidinol phosphate + 2-oxoglutarate = 3-(imidazol-4-yl)-2-oxopropyl phosphate + L-glutamate. It participates in amino-acid biosynthesis; L-histidine biosynthesis; L-histidine from 5-phospho-alpha-D-ribose 1-diphosphate: step 7/9. The chain is Histidinol-phosphate aminotransferase from Staphylococcus aureus (strain bovine RF122 / ET3-1).